The primary structure comprises 71 residues: Phosphatidylinositol N-acetylglucosaminyltransferase subunit Y (71 aa).

Over 1-5 (MIRSL) the chain is Cytoplasmic. A helical transmembrane segment spans residues 6 to 26 (PTMTVLIPLVSLAGLLYSASV). Over 27 to 44 (EEGFPEGCTSASSLCFYS) the chain is Lumenal. Residues 45-65 (LLLPVTVPVYVFFHLWTWMGL) form a helical membrane-spanning segment. The Cytoplasmic segment spans residues 66–71 (KLFRHN).

As to quaternary structure, component of the glycosylphosphatidylinositol-N-acetylglucosaminyltransferase (GPI-GnT) complex composed at least by PIGA, PIGC, PIGH, PIGP, PIGQ, PIGY and DPM2. Interacts directly with PIGA; this interaction regulates glycosylphosphatidylinositol-N-acetylglucosaminyltransferase activity. Does not interact with Ras proteins.

It is found in the endoplasmic reticulum membrane. It participates in glycolipid biosynthesis; glycosylphosphatidylinositol-anchor biosynthesis. Functionally, part of the glycosylphosphatidylinositol-N-acetylglucosaminyltransferase (GPI-GnT) complex that catalyzes the transfer of N-acetylglucosamine from UDP-N-acetylglucosamine to phosphatidylinositol and participates in the first step of GPI biosynthesis. May act by regulating the catalytic subunit PIGA. The polypeptide is Phosphatidylinositol N-acetylglucosaminyltransferase subunit Y (Mus musculus (Mouse)).